A 2244-amino-acid polypeptide reads, in one-letter code: Multifunctional protein ura1 (2244 aa).

The interval 1-437 (MSGLLPSLSS…GPRDTEFLFD (437 aa)) is GATase (Glutamine amidotransferase). The disordered stretch occupies residues 16 to 44 (QSEALGMPRTHGPKPSENDPKEPTCSPSP). L-glutamine contacts are provided by serine 101, glycine 309, and glycine 311. Positions 264 to 449 (RILVIDVGMK…IDVVKRSADA (186 aa)) constitute a Glutamine amidotransferase type-1 domain. Cysteine 338 functions as the Nucleophile; for GATase activity in the catalytic mechanism. Residues glutamine 342, asparagine 380, glycine 382, and tyrosine 383 each contribute to the L-glutamine site. Active-site for GATase activity residues include histidine 422 and glutamate 424. A linker region spans residues 438–477 (VFIDVVKRSADAKSLQPFKLPGGTIEENRSRHPLVDAKRV). The segment at 478 to 1014 (LILGSGGLSI…VEHDIHFNDK (537 aa)) is CPSase A. The tract at residues 478–1514 (LILGSGGLSI…TNVKCAKLMI (1037 aa)) is CPSase (Carbamoyl phosphate synthase). The ATP site is built by arginine 594, arginine 634, glycine 640, glycine 641, arginine 671, methionine 673, glutamate 678, glycine 704, isoleucine 705, histidine 706, glutamine 747, and glutamate 761. One can recognise an ATP-grasp 1 domain in the interval 598-790 (ARAMDEINEK…LAFTAAKLGL (193 aa)). Mg(2+)-binding residues include glutamine 747, glutamate 761, and asparagine 763. Residues glutamine 747, glutamate 761, and asparagine 763 each coordinate Mn(2+). Positions 1015–1514 (GVMVLGSGVY…TNVKCAKLMI (500 aa)) are CPSase B. Serine 1119 is subject to Phosphoserine. In terms of domain architecture, ATP-grasp 2 spans 1133–1324 (SRMLDDIGVD…MISMATDVIM (192 aa)). ATP is bound by residues arginine 1169, lysine 1208, isoleucine 1210, glutamate 1215, glycine 1240, valine 1241, histidine 1242, serine 1243, glutamine 1283, and glutamate 1295. Mg(2+) contacts are provided by glutamine 1283, glutamate 1295, and asparagine 1297. Residues glutamine 1283, glutamate 1295, and asparagine 1297 each contribute to the Mn(2+) site. The 163-residue stretch at 1390 to 1552 (FRLPKKNILI…INISAFLPEF (163 aa)) folds into the MGS-like domain. Positions 1515 to 1524 (EAICRNLDFS) are linker. The tract at residues 1525–1853 (LSTVDFQSSF…FDGHDVFFDG (329 aa)) is defective DHOase domain. The interval 1854-1935 (ELNFEHTYGR…VQLINSSPFY (82 aa)) is linker. A phosphoserine mark is found at serine 1881 and serine 1885. The interval 1936 to 2244 (RKHIISVHQV…CVMGATEVAN (309 aa)) is ATCase (Aspartate transcarbamylase). Positions 1988 and 1989 each coordinate carbamoyl phosphate. Lysine 2016 lines the L-aspartate pocket. Carbamoyl phosphate-binding residues include arginine 2037, histidine 2065, and glutamine 2068. L-aspartate contacts are provided by arginine 2098 and arginine 2160. The carbamoyl phosphate site is built by leucine 2199 and proline 2200.

This sequence in the N-terminal section; belongs to the CarA family. The protein in the 2nd section; belongs to the CarB family. It in the 3rd section; belongs to the metallo-dependent hydrolases superfamily. DHOase family. CAD subfamily. In the C-terminal section; belongs to the aspartate/ornithine carbamoyltransferase superfamily. ATCase family. Mg(2+) is required as a cofactor. Requires Mn(2+) as cofactor.

It catalyses the reaction hydrogencarbonate + L-glutamine + 2 ATP + H2O = carbamoyl phosphate + L-glutamate + 2 ADP + phosphate + 2 H(+). The catalysed reaction is L-glutamine + H2O = L-glutamate + NH4(+). It carries out the reaction hydrogencarbonate + NH4(+) + 2 ATP = carbamoyl phosphate + 2 ADP + phosphate + 2 H(+). The enzyme catalyses carbamoyl phosphate + L-aspartate = N-carbamoyl-L-aspartate + phosphate + H(+). It participates in pyrimidine metabolism; UMP biosynthesis via de novo pathway; (S)-dihydroorotate from bicarbonate: step 1/3. The protein operates within pyrimidine metabolism; UMP biosynthesis via de novo pathway; (S)-dihydroorotate from bicarbonate: step 2/3. With respect to regulation, both CPSase and ATCase activities are feedback inhibited by the end product UTP. In terms of biological role, multifunctional protein that encodes the first 2 enzymatic activities of the de novo pyrimidine pathway: carbamoylphosphate synthetase (CPSase; EC 6.3.5.5) and aspartate transcarbamylase (ATCase; EC 2.1.3.2). The CPSase-function is accomplished in 2 steps, by a glutamine-dependent amidotransferase activity (GATase) that binds and cleaves glutamine to produce ammonia, followed by an ammonium-dependent carbamoyl phosphate synthetase, which reacts with the ammonia, hydrogencarbonate and ATP to form carbamoyl phosphate. The endogenously produced carbamoyl phosphate is sequestered and channeled to the ATCase active site. ATCase then catalyzes the formation of carbamoyl-L-aspartate from L-aspartate and carbamoyl phosphate. This Schizosaccharomyces pombe (strain 972 / ATCC 24843) (Fission yeast) protein is Multifunctional protein ura1 (ura1).